The following is a 468-amino-acid chain: ATP synthase subunit beta (468 aa).

Gly-155–Thr-162 serves as a coordination point for ATP.

This sequence belongs to the ATPase alpha/beta chains family. In terms of assembly, F-type ATPases have 2 components, CF(1) - the catalytic core - and CF(0) - the membrane proton channel. CF(1) has five subunits: alpha(3), beta(3), gamma(1), delta(1), epsilon(1). CF(0) has three main subunits: a(1), b(2) and c(9-12). The alpha and beta chains form an alternating ring which encloses part of the gamma chain. CF(1) is attached to CF(0) by a central stalk formed by the gamma and epsilon chains, while a peripheral stalk is formed by the delta and b chains.

The protein resides in the cell membrane. The enzyme catalyses ATP + H2O + 4 H(+)(in) = ADP + phosphate + 5 H(+)(out). Its function is as follows. Produces ATP from ADP in the presence of a proton gradient across the membrane. The catalytic sites are hosted primarily by the beta subunits. In Streptococcus sanguinis (strain SK36), this protein is ATP synthase subunit beta.